Here is a 336-residue protein sequence, read N- to C-terminus: Phytochrome A-associated F-box protein (336 aa).

The region spanning 3–55 (ESVFSCIPEDVVFNIFFKLQDDPRNWARLACVCTKFSSIVRNVCCKTQCYSAI) is the F-box domain. The Nuclear localization signal signature appears at 197–201 (RKRRK).

As to quaternary structure, probable component of an E3 ubiquitin ligase SCF complex. Interacts with SKP1A/ASK1 and SKP1B/ASK2.

It is found in the nucleus. The protein operates within protein modification; protein ubiquitination. Functionally, component of SCF(ASK-cullin-F-box) E3 ubiquitin ligase complexes, which may mediate the ubiquitination and subsequent proteasomal degradation of target proteins. Negative regulator of the phyA signaling pathway that shifts the responsiveness of the phyA signaling system associated with hypocotyl elongation from red to far-red wavelength. The polypeptide is Phytochrome A-associated F-box protein (EID1) (Arabidopsis thaliana (Mouse-ear cress)).